A 339-amino-acid chain; its full sequence is Tetraacyldisaccharide 4'-kinase (339 aa).

Position 58 to 65 (58 to 65 (TVGGSGKT)) interacts with ATP.

It belongs to the LpxK family.

It carries out the reaction a lipid A disaccharide + ATP = a lipid IVA + ADP + H(+). It participates in glycolipid biosynthesis; lipid IV(A) biosynthesis; lipid IV(A) from (3R)-3-hydroxytetradecanoyl-[acyl-carrier-protein] and UDP-N-acetyl-alpha-D-glucosamine: step 6/6. Its function is as follows. Transfers the gamma-phosphate of ATP to the 4'-position of a tetraacyldisaccharide 1-phosphate intermediate (termed DS-1-P) to form tetraacyldisaccharide 1,4'-bis-phosphate (lipid IVA). This is Tetraacyldisaccharide 4'-kinase from Shewanella baltica (strain OS185).